The primary structure comprises 105 residues: Small ribosomal subunit protein uS10 (105 aa).

This sequence belongs to the universal ribosomal protein uS10 family. As to quaternary structure, part of the 30S ribosomal subunit.

Involved in the binding of tRNA to the ribosomes. This is Small ribosomal subunit protein uS10 from Rickettsia rickettsii (strain Iowa).